An 815-amino-acid chain; its full sequence is cGMP-specific 3',5'-cyclic phosphodiesterase delta (815 aa).

Topologically, residues 1–56 are cytoplasmic; it reads MNEYNNDNMEQEKEKKKEEQKYKNIIKKEYFIFPRLYDKNKEIEYNKLRIHNIKEY. The helical transmembrane segment at 57–77 threads the bilayer; it reads ICIHLTISLFIILIECFVFSF. Residues 78 to 86 lie on the Extracellular side of the membrane; that stretch reads NLNIKDTTY. A helical transmembrane segment spans residues 87 to 107; it reads VEICVVIFSILNCLMHIVVLI. The Cytoplasmic segment spans residues 108 to 120; that stretch reads KMYFFTSESVYTK. Residues 121-141 form a helical membrane-spanning segment; it reads GVFIGYIVLNQVFQFLSLYFF. The Extracellular portion of the chain corresponds to 142–160; it reads TKRNEQSKNDIAHLKYYDN. A helical transmembrane segment spans residues 161-181; that stretch reads SFNLYVHFFVDSVFILCLPAL. Topologically, residues 182–183 are cytoplasmic; the sequence is SF. A helical membrane pass occupies residues 184 to 204; it reads FLSVLFMMMFLCLNILLINMI. The Extracellular portion of the chain corresponds to 205–210; sequence KFNKTN. N-linked (GlcNAc...) asparagine glycosylation occurs at asparagine 207. Residues 211–231 traverse the membrane as a helical segment; it reads YGSDIYHICLLSVVLLMFLIL. At 232–815 the chain is on the cytoplasmic side; that stretch reads RYMMEERNRL…FKEEIKHGKL (584 aa). The 379-residue stretch at 384 to 762 folds into the PDEase domain; that stretch reads YEVEVLKNIK…QTWRLIEKNI (379 aa). Histidine 459 functions as the Proton donor in the catalytic mechanism. Position 459–463 (459–463) interacts with 3',5'-cyclic GMP; that stretch reads HNANH. The a divalent metal cation site is built by histidine 463, histidine 499, aspartate 500, and aspartate 616. Residues aspartate 500, aspartate 616, and glutamine 715 each contribute to the 3',5'-cyclic GMP site.

The protein belongs to the cyclic nucleotide phosphodiesterase family. Requires a divalent metal cation as cofactor.

It localises to the membrane. The catalysed reaction is 3',5'-cyclic GMP + H2O = GMP + H(+). The protein operates within purine metabolism; 3',5'-cyclic GMP degradation; GMP from 3',5'-cyclic GMP: step 1/1. Specifically hydrolyzes the second messenger cGMP, which is a key regulator of many important physiological processes. Probably by regulating cGMP levels, required for activation of gametogenesis. The sequence is that of cGMP-specific 3',5'-cyclic phosphodiesterase delta from Plasmodium falciparum (isolate 3D7).